A 136-amino-acid chain; its full sequence is MSKLNKSIIAEFESAQITRQVPQFSQGDTIVVNVKVKEGNRERLQAYEGVVIATKNAGLNSAFTVRKISHGYGVERVFQTHSPIIESIEIKRRGKVRAAKLYYLRGLEGKAARIKEDLAATAQEKLARKTVTAKAG.

The protein belongs to the bacterial ribosomal protein bL19 family.

This protein is located at the 30S-50S ribosomal subunit interface and may play a role in the structure and function of the aminoacyl-tRNA binding site. In Xylella fastidiosa (strain 9a5c), this protein is Large ribosomal subunit protein bL19.